A 74-amino-acid chain; its full sequence is Large ribosomal subunit protein uL29 (74 aa).

The protein belongs to the universal ribosomal protein uL29 family.

The protein is Large ribosomal subunit protein uL29 (rpmC) of Streptomyces coelicolor (strain ATCC BAA-471 / A3(2) / M145).